Reading from the N-terminus, the 635-residue chain is 1-deoxy-D-xylulose-5-phosphate synthase (635 aa).

Thiamine diphosphate contacts are provided by residues His78 and 119–121 (GHA). Asp150 is a binding site for Mg(2+). Thiamine diphosphate is bound by residues 151–152 (GS), Asn179, Phe291, and Glu376. Asn179 is a binding site for Mg(2+).

The protein belongs to the transketolase family. DXPS subfamily. Homodimer. Mg(2+) serves as cofactor. Thiamine diphosphate is required as a cofactor.

It carries out the reaction D-glyceraldehyde 3-phosphate + pyruvate + H(+) = 1-deoxy-D-xylulose 5-phosphate + CO2. The protein operates within metabolic intermediate biosynthesis; 1-deoxy-D-xylulose 5-phosphate biosynthesis; 1-deoxy-D-xylulose 5-phosphate from D-glyceraldehyde 3-phosphate and pyruvate: step 1/1. Its function is as follows. Catalyzes the acyloin condensation reaction between C atoms 2 and 3 of pyruvate and glyceraldehyde 3-phosphate to yield 1-deoxy-D-xylulose-5-phosphate (DXP). This Chlorobaculum tepidum (strain ATCC 49652 / DSM 12025 / NBRC 103806 / TLS) (Chlorobium tepidum) protein is 1-deoxy-D-xylulose-5-phosphate synthase.